The sequence spans 906 residues: Aconitate hydratase A (906 aa).

[4Fe-4S] cluster-binding residues include C443, C509, and C512.

It belongs to the aconitase/IPM isomerase family. Monomer. Requires [4Fe-4S] cluster as cofactor.

It catalyses the reaction citrate = D-threo-isocitrate. It carries out the reaction (2S,3R)-3-hydroxybutane-1,2,3-tricarboxylate = 2-methyl-cis-aconitate + H2O. It functions in the pathway carbohydrate metabolism; tricarboxylic acid cycle; isocitrate from oxaloacetate: step 2/2. It participates in organic acid metabolism; propanoate degradation. In terms of biological role, involved in the catabolism of short chain fatty acids (SCFA) via the tricarboxylic acid (TCA)(acetyl degradation route) and probably via the 2-methylcitrate cycle I (propionate degradation route). Catalyzes the reversible isomerization of citrate to isocitrate via cis-aconitate. Could catalyze the hydration of 2-methyl-cis-aconitate to yield (2R,3S)-2-methylisocitrate. The apo form of AcnA functions as a RNA-binding regulatory protein. This chain is Aconitate hydratase A, found in Bradyrhizobium diazoefficiens (strain JCM 10833 / BCRC 13528 / IAM 13628 / NBRC 14792 / USDA 110).